A 344-amino-acid chain; its full sequence is Protein RecA (344 aa).

Residue 66 to 73 coordinates ATP; that stretch reads GPESSGKT.

Belongs to the RecA family.

It localises to the cytoplasm. Functionally, can catalyze the hydrolysis of ATP in the presence of single-stranded DNA, the ATP-dependent uptake of single-stranded DNA by duplex DNA, and the ATP-dependent hybridization of homologous single-stranded DNAs. It interacts with LexA causing its activation and leading to its autocatalytic cleavage. This is Protein RecA from Methylobacillus flagellatus.